The following is a 266-amino-acid chain: MGSASEDLLVTLQILPGFFSNCLFLALYDSVVLVKRVVALLSRSRSAGCGEWRRMLTSEGLRSIWNSFLLDAHKQVKLGCEAPNSKVVKVPDGPRWSSTVVPCGSRIQTGGECRLLDFESSDRPLVVNFGSATUPPFISHLPAFRQLVEDFSDVADFLLVYIDEAHPSDGWVAPQMGACSFSFRKHQNLEERIGAARKLIEHFSLPPQCQLVADCMDNNANVAYGVANERVCIVHQRKIAYLGGKGPFFYSLKDVRQWLELSYGRR.

The Lumenal portion of the chain corresponds to Met1–Gln13. A helical; Signal-anchor for type III membrane protein transmembrane segment spans residues Ile14 to Val34. Residues Lys35–Arg266 are Cytoplasmic-facing. The active site involves Sec134. A non-standard amino acid (selenocysteine) is located at residue Sec134.

Belongs to the iodothyronine deiodinase family. As to quaternary structure, predominantly monomer. Can form homodimers but homodimerization is not essential for enzyme activity.

Its subcellular location is the endoplasmic reticulum membrane. The catalysed reaction is 3,3',5-triiodo-L-thyronine + iodide + A + H(+) = L-thyroxine + AH2. It catalyses the reaction 3,3'-diiodo-L-thyronine + iodide + A + H(+) = 3,3',5'-triiodo-L-thyronine + AH2. The enzyme catalyses 3'-iodo-L-thyronine + iodide + A + H(+) = 3',5'-diiodo-L-thyronine + AH2. Its activity is regulated as follows. Not inhibited by N(6)-propylthiouracil. Its function is as follows. Plays a crucial role in the metabolism of thyroid hormones (TH) and has specific roles in TH activation and inactivation by deiodination. Catalyzes the conversion of T4 (L-thyroxine/3,5,3',5'-tetraiodothyronine) to T3 (3,5,3'-triiodothyronine) and rT3 (3,3',5'-triiodothyronine) to T2 (3,3'-diiodothyronine) via outer-ring deiodination (ORD). Catalyzes the conversion 3',5'-T2 (3,5-diiodothyronine) to 3-T1 (3-monoiodothyronine) via ORD. The polypeptide is Type II iodothyronine deiodinase (dio2) (Fundulus heteroclitus (Killifish)).